We begin with the raw amino-acid sequence, 172 residues long: Probable calcium-binding protein CML28 (172 aa).

EF-hand domains lie at 1-36 (MDSTELRKVFKMFDKNGDGRITKKELGESFKNFGIF), 37-72 (IPDDELDATMDKIDANGDGCVDVEEFGLLYRSILGD), 95-130 (DEDEGMREAFNVFDQNGDGFITVDELRSVLSSLGLK), and 133-168 (RTADDCRRMISMVDADGDGRVDFKEFKQMMRGGGFA). 19 residues coordinate Ca(2+): aspartate 14, asparagine 16, aspartate 18, arginine 20, glutamate 25, aspartate 50, asparagine 52, aspartate 54, cysteine 56, glutamate 61, aspartate 108, asparagine 110, aspartate 112, glutamate 119, aspartate 146, aspartate 148, aspartate 150, arginine 152, and glutamate 157.

Potential calcium sensor. In Oryza sativa subsp. japonica (Rice), this protein is Probable calcium-binding protein CML28 (CML28).